Here is a 502-residue protein sequence, read N- to C-terminus: Chromosomal replication initiator protein DnaA (502 aa).

The interval 1 to 112 is domain I, interacts with DnaA modulators; it reads MADDLSLGFT…PSTDHIDDNS (112 aa). The tract at residues 113-161 is domain II; that stretch reads SSADVLLTDDCGTDTDENYGEPLTGEYQGLPTYFTERPHHTESTVTGGT. Residues 162–378 form a domain III, AAA+ region region; that stretch reads SLNRRYTFET…GALIRVTAFA (217 aa). The ATP site is built by G206, G208, K209, and T210. A domain IV, binds dsDNA region spans residues 379–502; the sequence is SLNKTAIDKA…TTRIRQRSKR (124 aa).

Belongs to the DnaA family. As to quaternary structure, oligomerizes as a right-handed, spiral filament on DNA at oriC.

The protein localises to the cytoplasm. Functionally, plays an essential role in the initiation and regulation of chromosomal replication. ATP-DnaA binds to the origin of replication (oriC) to initiate formation of the DNA replication initiation complex once per cell cycle. Binds the DnaA box (a 9 base pair repeat at the origin) and separates the double-stranded (ds)DNA. Forms a right-handed helical filament on oriC DNA; dsDNA binds to the exterior of the filament while single-stranded (ss)DNA is stabiized in the filament's interior. The ATP-DnaA-oriC complex binds and stabilizes one strand of the AT-rich DNA unwinding element (DUE), permitting loading of DNA polymerase. After initiation quickly degrades to an ADP-DnaA complex that is not apt for DNA replication. Binds acidic phospholipids. The polypeptide is Chromosomal replication initiator protein DnaA (Mycobacterium leprae (strain TN)).